The chain runs to 846 residues: Protein arginine N-methyltransferase 9 (846 aa).

TPR repeat units follow at residues 25 to 58, 67 to 100, and 101 to 134; these read VARS…APEL, QYTL…FPDD, and EVIC…NPDF. SAM-dependent MTase PRMT-type domains follow at residues 137-466 and 530-846; these read AKEN…YLRI and NIPY…AVKP.

This sequence belongs to the class I-like SAM-binding methyltransferase superfamily. Protein arginine N-methyltransferase family. In terms of assembly, found in a complex with PRMT9, SF3B2 and SF3B4. Interacts with SF3B2.

It localises to the cytoplasm. It catalyses the reaction L-arginyl-[protein] + 2 S-adenosyl-L-methionine = N(omega),N(omega)'-dimethyl-L-arginyl-[protein] + 2 S-adenosyl-L-homocysteine + 2 H(+). Its function is as follows. Arginine methyltransferase that can both catalyze the formation of omega-N monomethylarginine (MMA) and symmetrical dimethylarginine (sDMA). Specifically mediates the symmetrical dimethylation of SF3B2. Involved in the regulation of alternative splicing of pre-mRNA. This Mus musculus (Mouse) protein is Protein arginine N-methyltransferase 9 (Prmt9).